The sequence spans 493 residues: GTPase Der (493 aa).

EngA-type G domains follow at residues 3–166 and 206–379; these read PVVA…AEAL and IKLA…KSAT. GTP is bound by residues 9-16, 56-60, 118-121, 212-219, 259-263, and 324-327; these read GRPNVGKS, DTGGI, NKVD, DTAGV, and NKWD. Positions 380-464 constitute a KH-like domain; it reads TRVGTSVLTR…PIRIQFQNSE (85 aa).

Belongs to the TRAFAC class TrmE-Era-EngA-EngB-Septin-like GTPase superfamily. EngA (Der) GTPase family. As to quaternary structure, associates with the 50S ribosomal subunit.

GTPase that plays an essential role in the late steps of ribosome biogenesis. The chain is GTPase Der from Vibrio atlanticus (strain LGP32) (Vibrio splendidus (strain Mel32)).